Reading from the N-terminus, the 300-residue chain is Delta-9 desaturase-like 4 protein (300 aa).

The next 2 membrane-spanning stretches (helical) occupy residues 39–59 (VVVI…WEAL) and 61–81 (FGLV…HRNL). Residues 78-83 (HRNLSH) carry the Histidine box-1 motif. The Histidine box-2 signature appears at 115–119 (HRFHH). 2 consecutive transmembrane segments (helical) span residues 175–195 (IAVH…LPYL) and 200–220 (GVGI…CHIW). Residues 247–251 (HNNHH) carry the Histidine box-3 motif.

The protein belongs to the fatty acid desaturase type 1 family. Requires Fe cation as cofactor.

It localises to the endoplasmic reticulum membrane. It functions in the pathway lipid metabolism; polyunsaturated fatty acid biosynthesis. The chain is Delta-9 desaturase-like 4 protein from Arabidopsis thaliana (Mouse-ear cress).